A 451-amino-acid polypeptide reads, in one-letter code: D-ribitol-5-phosphate cytidylyltransferase (451 aa).

The tract at residues 1-29 (MEAGPPGSARPAEPGPCLSGQRGADHTAS) is disordered.

It belongs to the IspD/TarI cytidylyltransferase family. IspD subfamily. In terms of assembly, homodimer. Ubiquitously expressed, with high expression in brain.

It localises to the cytoplasm. The protein resides in the cytosol. It carries out the reaction D-ribitol 5-phosphate + CTP + H(+) = CDP-L-ribitol + diphosphate. It catalyses the reaction D-ribose 5-phosphate + CTP + H(+) = CDP-D-ribose + diphosphate. The enzyme catalyses D-ribulose 5-phosphate + CTP + H(+) = CDP-D-ribulose + diphosphate. Its pathway is protein modification; protein glycosylation. Cytidylyltransferase required for protein O-linked mannosylation. Catalyzes the formation of CDP-ribitol nucleotide sugar from D-ribitol 5-phosphate. CDP-ribitol is a substrate of FKTN during the biosynthesis of the phosphorylated O-mannosyl trisaccharide (N-acetylgalactosamine-beta-3-N-acetylglucosamine-beta-4-(phosphate-6-)mannose), a carbohydrate structure present in alpha-dystroglycan (DAG1), which is required for binding laminin G-like domain-containing extracellular proteins with high affinity. Shows activity toward other pentose phosphate sugars and mediates formation of CDP-ribulose or CDP-ribose using CTP and ribulose-5-phosphate or ribose-5-phosphate, respectively. Not Involved in dolichol production. This chain is D-ribitol-5-phosphate cytidylyltransferase, found in Homo sapiens (Human).